A 248-amino-acid chain; its full sequence is UPF0736 protein BT9727_1080 (248 aa).

It belongs to the UPF0736 family.

The sequence is that of UPF0736 protein BT9727_1080 from Bacillus thuringiensis subsp. konkukian (strain 97-27).